The following is a 243-amino-acid chain: 1-(5-phosphoribosyl)-5-[(5-phosphoribosylamino)methylideneamino] imidazole-4-carboxamide isomerase (243 aa).

D10 functions as the Proton acceptor in the catalytic mechanism. The active-site Proton donor is D129.

The protein belongs to the HisA/HisF family.

The protein resides in the cytoplasm. It catalyses the reaction 1-(5-phospho-beta-D-ribosyl)-5-[(5-phospho-beta-D-ribosylamino)methylideneamino]imidazole-4-carboxamide = 5-[(5-phospho-1-deoxy-D-ribulos-1-ylimino)methylamino]-1-(5-phospho-beta-D-ribosyl)imidazole-4-carboxamide. The protein operates within amino-acid biosynthesis; L-histidine biosynthesis; L-histidine from 5-phospho-alpha-D-ribose 1-diphosphate: step 4/9. In Saccharopolyspora erythraea (strain ATCC 11635 / DSM 40517 / JCM 4748 / NBRC 13426 / NCIMB 8594 / NRRL 2338), this protein is 1-(5-phosphoribosyl)-5-[(5-phosphoribosylamino)methylideneamino] imidazole-4-carboxamide isomerase.